Reading from the N-terminus, the 437-residue chain is Enolase (437 aa).

Glutamine 163 is a binding site for (2R)-2-phosphoglycerate. Glutamate 205 functions as the Proton donor in the catalytic mechanism. 3 residues coordinate Mg(2+): aspartate 242, glutamate 285, and aspartate 312. The (2R)-2-phosphoglycerate site is built by lysine 337, arginine 366, serine 367, and lysine 388. The active-site Proton acceptor is the lysine 337.

It belongs to the enolase family. Mg(2+) serves as cofactor.

It is found in the cytoplasm. The protein resides in the secreted. The protein localises to the cell surface. The enzyme catalyses (2R)-2-phosphoglycerate = phosphoenolpyruvate + H2O. It functions in the pathway carbohydrate degradation; glycolysis; pyruvate from D-glyceraldehyde 3-phosphate: step 4/5. Catalyzes the reversible conversion of 2-phosphoglycerate (2-PG) into phosphoenolpyruvate (PEP). It is essential for the degradation of carbohydrates via glycolysis. In Nitratidesulfovibrio vulgaris (strain DP4) (Desulfovibrio vulgaris), this protein is Enolase.